A 39-amino-acid chain; its full sequence is Cytochrome b559 subunit beta (39 aa).

The chain crosses the membrane as a helical span at residues 14-30 (WLAIHGLAVPTVSFLGS). His18 contributes to the heme binding site.

This sequence belongs to the PsbE/PsbF family. As to quaternary structure, heterodimer of an alpha subunit and a beta subunit. PSII is composed of 1 copy each of membrane proteins PsbA, PsbB, PsbC, PsbD, PsbE, PsbF, PsbH, PsbI, PsbJ, PsbK, PsbL, PsbM, PsbT, PsbX, PsbY, PsbZ, Psb30/Ycf12, at least 3 peripheral proteins of the oxygen-evolving complex and a large number of cofactors. It forms dimeric complexes. It depends on heme b as a cofactor.

Its subcellular location is the plastid. The protein localises to the chloroplast thylakoid membrane. Functionally, this b-type cytochrome is tightly associated with the reaction center of photosystem II (PSII). PSII is a light-driven water:plastoquinone oxidoreductase that uses light energy to abstract electrons from H(2)O, generating O(2) and a proton gradient subsequently used for ATP formation. It consists of a core antenna complex that captures photons, and an electron transfer chain that converts photonic excitation into a charge separation. The polypeptide is Cytochrome b559 subunit beta (Allium textile (Textile onion)).